We begin with the raw amino-acid sequence, 422 residues long: UDP-N-acetylglucosamine 1-carboxyvinyltransferase (422 aa).

22-23 (KN) is a phosphoenolpyruvate binding site. R93 is a binding site for UDP-N-acetyl-alpha-D-glucosamine. The active-site Proton donor is the C117. C117 carries the 2-(S-cysteinyl)pyruvic acid O-phosphothioketal modification. Residues 122 to 126 (RPVDL), D308, and L330 contribute to the UDP-N-acetyl-alpha-D-glucosamine site.

It belongs to the EPSP synthase family. MurA subfamily.

It is found in the cytoplasm. It carries out the reaction phosphoenolpyruvate + UDP-N-acetyl-alpha-D-glucosamine = UDP-N-acetyl-3-O-(1-carboxyvinyl)-alpha-D-glucosamine + phosphate. It functions in the pathway cell wall biogenesis; peptidoglycan biosynthesis. Functionally, cell wall formation. Adds enolpyruvyl to UDP-N-acetylglucosamine. The sequence is that of UDP-N-acetylglucosamine 1-carboxyvinyltransferase from Helicobacter pylori (strain J99 / ATCC 700824) (Campylobacter pylori J99).